The following is a 138-amino-acid chain: Small ribosomal subunit protein uS11 (138 aa).

Low complexity predominate over residues 1–12; the sequence is MPPKKAAASSAK. Positions 1-28 are disordered; sequence MPPKKAAASSAKKGQKTRRREKKNVPHG. Basic residues predominate over residues 13-22; it reads KGQKTRRREK.

It belongs to the universal ribosomal protein uS11 family. Part of the 30S ribosomal subunit. Interacts with proteins S7 and S18. Binds to IF-3.

Located on the platform of the 30S subunit, it bridges several disparate RNA helices of the 16S rRNA. Forms part of the Shine-Dalgarno cleft in the 70S ribosome. This chain is Small ribosomal subunit protein uS11, found in Mycobacterium sp. (strain JLS).